We begin with the raw amino-acid sequence, 100 residues long: Small ribosomal subunit protein uS14c (100 aa).

This sequence belongs to the universal ribosomal protein uS14 family. In terms of assembly, part of the 30S ribosomal subunit.

It localises to the plastid. It is found in the chloroplast. In terms of biological role, binds 16S rRNA, required for the assembly of 30S particles. This Pisum sativum (Garden pea) protein is Small ribosomal subunit protein uS14c.